Consider the following 219-residue polypeptide: Ribose-5-phosphate isomerase A (219 aa).

Residues 28–31, 81–84, and 94–97 contribute to the substrate site; these read TGST, DGAD, and KGGG. Glutamate 103 (proton acceptor) is an active-site residue. A substrate-binding site is contributed by lysine 121.

Belongs to the ribose 5-phosphate isomerase family. Homodimer.

It catalyses the reaction aldehydo-D-ribose 5-phosphate = D-ribulose 5-phosphate. Its pathway is carbohydrate degradation; pentose phosphate pathway; D-ribose 5-phosphate from D-ribulose 5-phosphate (non-oxidative stage): step 1/1. In terms of biological role, catalyzes the reversible conversion of ribose-5-phosphate to ribulose 5-phosphate. This chain is Ribose-5-phosphate isomerase A, found in Nitrosomonas europaea (strain ATCC 19718 / CIP 103999 / KCTC 2705 / NBRC 14298).